Reading from the N-terminus, the 263-residue chain is Indolethylamine N-methyltransferase (263 aa).

At lysine 13 the chain carries N6-succinyllysine. S-adenosyl-L-methionine is bound by residues tyrosine 20, tyrosine 25, 63–64, tyrosine 69, aspartate 85, and asparagine 90; that span reads GS. Lysine 96 is subject to N6-succinyllysine. S-adenosyl-L-methionine-binding positions include 142-143 and leucine 163; that span reads DA.

The protein belongs to the class I-like SAM-binding methyltransferase superfamily. NNMT/PNMT/TEMT family. Monomer. In terms of tissue distribution, highly expressed in lung, also detected in liver and at very low levels in brain.

Its subcellular location is the cytoplasm. It catalyses the reaction a tertiary amine + S-adenosyl-L-methionine = a methylated tertiary amine + S-adenosyl-L-homocysteine + H(+). The enzyme catalyses a secondary amine + S-adenosyl-L-methionine = a methylated secondary amine + S-adenosyl-L-homocysteine + H(+). The catalysed reaction is a primary amine + S-adenosyl-L-methionine = a methylated primary amine + S-adenosyl-L-homocysteine + H(+). It carries out the reaction dimethyl sulfide + S-adenosyl-L-methionine = trimethylsulfonium + S-adenosyl-L-homocysteine. Functionally, catalyzes the N-methylation of tryptamine and structurally related compounds. Functions as a thioether S-methyltransferase and is active with a variety of thioethers and the corresponding selenium and tellurium compounds, including 3-methylthiopropionaldehyde, dimethyl selenide, dimethyl telluride, 2-methylthioethylamine, 2-methylthioethanol, methyl-n-propyl sulfide and diethyl sulfide. Plays an important role in the detoxification of selenium compounds. In Oryctolagus cuniculus (Rabbit), this protein is Indolethylamine N-methyltransferase (INMT).